The chain runs to 78 residues: Probable two-component-system connector protein YcgZ (78 aa).

Functionally, probably a connector protein for RcsB/C regulation of biofilm formation, providing additional signal input into the two-component signaling pathway. Partially antagonizes the activities of YmgA and AriR, proteins that, via the Rcs phosphorelay, promote the synthesis of colanic acid, an exopolysaccharide and matrix component. This chain is Probable two-component-system connector protein YcgZ (ycgZ), found in Escherichia coli (strain K12).